Consider the following 96-residue polypeptide: UPF0235 protein YggU (96 aa).

It belongs to the UPF0235 family.

The polypeptide is UPF0235 protein YggU (Salmonella arizonae (strain ATCC BAA-731 / CDC346-86 / RSK2980)).